Consider the following 431-residue polypeptide: Serine--tRNA ligase (431 aa).

237 to 239 contributes to the L-serine binding site; that stretch reads TAE. ATP is bound at residue 268–270; it reads RSE. Glu-291 contributes to the L-serine binding site. 355 to 358 contributes to the ATP binding site; that stretch reads EISS. Ser-390 contacts L-serine.

This sequence belongs to the class-II aminoacyl-tRNA synthetase family. Type-1 seryl-tRNA synthetase subfamily. As to quaternary structure, homodimer. The tRNA molecule binds across the dimer.

The protein localises to the cytoplasm. It catalyses the reaction tRNA(Ser) + L-serine + ATP = L-seryl-tRNA(Ser) + AMP + diphosphate + H(+). The catalysed reaction is tRNA(Sec) + L-serine + ATP = L-seryl-tRNA(Sec) + AMP + diphosphate + H(+). The protein operates within aminoacyl-tRNA biosynthesis; selenocysteinyl-tRNA(Sec) biosynthesis; L-seryl-tRNA(Sec) from L-serine and tRNA(Sec): step 1/1. Its function is as follows. Catalyzes the attachment of serine to tRNA(Ser). Is also able to aminoacylate tRNA(Sec) with serine, to form the misacylated tRNA L-seryl-tRNA(Sec), which will be further converted into selenocysteinyl-tRNA(Sec). The protein is Serine--tRNA ligase of Neisseria meningitidis serogroup A / serotype 4A (strain DSM 15465 / Z2491).